Here is a 78-residue protein sequence, read N- to C-terminus: MSNIEDRVRKIIIEQLGVDEAEVKNEASFVDDLGADSLDTVELVMALEEEFDTEIPDEAAEKITTVQAAIDYVNSASE.

A Carrier domain is found at 2–77 (SNIEDRVRKI…AAIDYVNSAS (76 aa)). Ser-37 bears the O-(pantetheine 4'-phosphoryl)serine mark.

Belongs to the acyl carrier protein (ACP) family. Post-translationally, 4'-phosphopantetheine is transferred from CoA to a specific serine of apo-ACP by AcpS. This modification is essential for activity because fatty acids are bound in thioester linkage to the sulfhydryl of the prosthetic group.

The protein resides in the cytoplasm. It functions in the pathway lipid metabolism; fatty acid biosynthesis. Functionally, carrier of the growing fatty acid chain in fatty acid biosynthesis. The sequence is that of Acyl carrier protein from Photobacterium profundum (strain SS9).